A 398-amino-acid chain; its full sequence is Succinate--CoA ligase [ADP-forming] subunit beta (398 aa).

The region spanning 9 to 254 is the ATP-grasp domain; sequence KRLLHEYGAP…LSEEDPKEIE (246 aa). Residues Lys46, 53 to 55, Glu109, Ala112, and Glu117 contribute to the ATP site; that span reads GRG. The Mg(2+) site is built by Asn209 and Asp223. Substrate is bound by residues Asn274 and 331–333; that span reads GIM.

It belongs to the succinate/malate CoA ligase beta subunit family. Heterotetramer of two alpha and two beta subunits. It depends on Mg(2+) as a cofactor.

It carries out the reaction succinate + ATP + CoA = succinyl-CoA + ADP + phosphate. The enzyme catalyses GTP + succinate + CoA = succinyl-CoA + GDP + phosphate. It participates in carbohydrate metabolism; tricarboxylic acid cycle; succinate from succinyl-CoA (ligase route): step 1/1. In terms of biological role, succinyl-CoA synthetase functions in the citric acid cycle (TCA), coupling the hydrolysis of succinyl-CoA to the synthesis of either ATP or GTP and thus represents the only step of substrate-level phosphorylation in the TCA. The beta subunit provides nucleotide specificity of the enzyme and binds the substrate succinate, while the binding sites for coenzyme A and phosphate are found in the alpha subunit. This Bartonella tribocorum (strain CIP 105476 / IBS 506) protein is Succinate--CoA ligase [ADP-forming] subunit beta.